Reading from the N-terminus, the 917-residue chain is Coiled-coil domain-containing protein 186 (917 aa).

Disordered regions lie at residues 1–52 (MKIR…SGDE), 97–118 (SCANTDTCPEDSGQIDDFPGGD), and 701–769 (TQRR…SVAV). Positions 33–44 (TTEKTSELRDDS) are enriched in basic and acidic residues. Positions 220–736 (RYLQQELTVK…TENGNHDKDI (517 aa)) form a coiled coil. Over residues 722–736 (RKLEQTENGNHDKDI) the composition is skewed to basic and acidic residues. A compositionally biased stretch (low complexity) spans 737-748 (SSMGSRSSSSGS). Residue serine 759 is modified to Phosphoserine. Coiled-coil stretches lie at residues 778 to 822 (AMLI…IQSY) and 874 to 913 (KLQAVLEDTLLKNITLKENLQTLGTEIERLIKHQHELEQR).

In terms of tissue distribution, expressed in postnatal germ cells.

The chain is Coiled-coil domain-containing protein 186 (Ccdc186) from Mus musculus (Mouse).